The following is a 323-amino-acid chain: MFGEAGKTKFQIDLRQHLRDQNISDNLVHLICEIAEASKYVINAIRTGDLGVAGTSNLYGEEQLALDVLSDRIIRKRLQHSGVVCNIASEEMEEIFQVTSNPQGMFSVAYDPLDGSSLVDVNLAVGTIVGIYQGSDLLQPGRHMVGAMYILYGPRVSMVYSVGKGVYEFTMNQLMEFTLSREQIQMHPSGDIYSPGGLRKKYCEGNERFIRYLEAKGSKLRYSGGFVPDINQVLIKGKGVFMYPALTDSPNGKLRLLFELNPMAFLIEQAGGAATNGHMPILDIVPESLDQRCPIYLGCRDDVVKAAEFLNTPCKTPHEEPQP.

The Mg(2+) site is built by Glu90, Asp111, Leu113, and Asp114. Residues 114–117, Tyr222, and Lys253 each bind substrate; that span reads DGSS. Glu259 is a binding site for Mg(2+).

Belongs to the FBPase class 1 family. Homotetramer. Requires Mg(2+) as cofactor.

Its subcellular location is the cytoplasm. It catalyses the reaction beta-D-fructose 1,6-bisphosphate + H2O = beta-D-fructose 6-phosphate + phosphate. Its pathway is carbohydrate biosynthesis; gluconeogenesis. In Pelobacter propionicus (strain DSM 2379 / NBRC 103807 / OttBd1), this protein is Fructose-1,6-bisphosphatase class 1.